A 306-amino-acid polypeptide reads, in one-letter code: Pre-mRNA-splicing factor cwf26 (306 aa).

The segment at 130-152 is disordered; it reads KAEERRKREEKSSNLDEEELRKS. A coiled-coil region spans residues 130-198; sequence KAEERRKREE…KEQQQGVVQV (69 aa).

This sequence belongs to the CWC26 family. As to quaternary structure, belongs to the 40S cdc5-associated complex (or cwf complex), a spliceosome sub-complex reminiscent of a late-stage spliceosome composed of the U2, U5 and U6 snRNAs and at least brr2, cdc5, cwf2/prp3, cwf3/syf1, cwf4/syf3, cwf5/ecm2, spp42/cwf6, cwf7/spf27, cwf8, cwf9, cwf10, cwf11, cwf12, prp45/cwf13, cwf14, cwf15, cwf16, cwf17, cwf18, cwf19, cwf20, cwf21, cwf22, cwf23, cwf24, cwf25, cwf26, cyp7/cwf27, cwf28, cwf29/ist3, lea1, msl1, prp5/cwf1, prp10, prp12/sap130, prp17, prp22, sap61, sap62, sap114, sap145, slu7, smb1, smd1, smd3, smf1, smg1 and syf2.

The protein resides in the cytoplasm. Its subcellular location is the nucleus. Involved in mRNA splicing. In Schizosaccharomyces pombe (strain 972 / ATCC 24843) (Fission yeast), this protein is Pre-mRNA-splicing factor cwf26 (cwf26).